The chain runs to 172 residues: Probable calcium-binding protein CML28 (172 aa).

EF-hand domains lie at 1–36 (MDST…FGIF), 37–72 (IPDD…ILGD), 95–130 (DEDE…LGLK), and 133–168 (RTAD…GGFA). Ca(2+) is bound by residues Asp-14, Asn-16, Asp-18, Arg-20, Glu-25, Asp-50, Asn-52, Asp-54, Cys-56, Glu-61, Asp-108, Asn-110, Asp-112, Glu-119, Asp-146, Asp-148, Asp-150, Arg-152, and Glu-157.

Functionally, potential calcium sensor. The chain is Probable calcium-binding protein CML28 (CML28) from Oryza sativa subsp. japonica (Rice).